A 1484-amino-acid chain; its full sequence is Ral GTPase-activating protein subunit beta (1484 aa).

2 disordered regions span residues 355–437 and 699–728; these read PRSD…APRR and ENNL…PDSE. Phosphoserine is present on Ser359. Residues Thr363 and Thr379 each carry the phosphothreonine modification. Polar residues-rich tracts occupy residues 369-381, 392-428, and 701-725; these read SMPQ…TTPP, NKAT…TSSE, and NLKS…PTTP. Phosphoserine occurs at positions 421 and 710. Thr724 bears the Phosphothreonine mark. The 245-residue stretch at 1138–1382 folds into the Rap-GAP domain; the sequence is IGYLDLLPCR…TTLEKEVPVI (245 aa). Residue Ser1275 is modified to Phosphoserine. Residues 1297 to 1325 form a disordered region; that stretch reads PNHTDSLNSSQRLSPSSRMKKLPQGRPVP. The segment covering 1302-1313 has biased composition (low complexity); it reads SLNSSQRLSPSS.

Component of the heterodimeric RalGAP1 complex with RALGAPA1 and of the heterodimeric RalGAP2 complex with RALGAPA2. Heterodimerization is required for activity. Abundantly expressed in testis, pancreas, lung, thymus, brown fat, and white fat. Expressed at lower levels in the brain.

Its function is as follows. Non-catalytic subunit of the heterodimeric RalGAP1 and RalGAP2 complexes which act as GTPase activators for the Ras-like small GTPases RALA and RALB. In Mus musculus (Mouse), this protein is Ral GTPase-activating protein subunit beta (Ralgapb).